The following is a 187-amino-acid chain: Phosphoheptose isomerase (187 aa).

The 154-residue stretch at 34-187 (CIEALKNQKK…ILCSLIDESF (154 aa)) folds into the SIS domain. A substrate-binding site is contributed by 49–51 (NGG). Zn(2+) is bound by residues H58 and E62. Substrate-binding positions include E62, 91–92 (ND), 117–119 (STS), S122, and Q169. Zn(2+) is bound by residues Q169 and H177.

This sequence belongs to the SIS family. GmhA subfamily. Homotetramer. Zn(2+) serves as cofactor.

The protein resides in the cytoplasm. The catalysed reaction is 2 D-sedoheptulose 7-phosphate = D-glycero-alpha-D-manno-heptose 7-phosphate + D-glycero-beta-D-manno-heptose 7-phosphate. It participates in carbohydrate biosynthesis; D-glycero-D-manno-heptose 7-phosphate biosynthesis; D-glycero-alpha-D-manno-heptose 7-phosphate and D-glycero-beta-D-manno-heptose 7-phosphate from sedoheptulose 7-phosphate: step 1/1. Functionally, catalyzes the isomerization of sedoheptulose 7-phosphate in D-glycero-D-manno-heptose 7-phosphate. The sequence is that of Phosphoheptose isomerase from Nitratiruptor sp. (strain SB155-2).